Consider the following 471-residue polypeptide: Proline and serine-rich protein 2 (471 aa).

2 disordered regions span residues 1–46 and 82–247; these read MPGN…SFTM and CDSG…GDHV. The span at 26-43 shows a compositional bias: low complexity; the sequence is LSRGGSLESRCSSSRSRS. The residue at position 43 (Ser43) is a Phosphoserine. At Thr45 the chain carries Phosphothreonine. The span at 90–101 shows a compositional bias: low complexity; it reads SPQSLEESPSSH. Positions 154-177 are enriched in pro residues; the sequence is LPPPDSRGPEVFPLPPSLPVPAPS. Phosphoserine occurs at positions 187, 220, and 223. The residue at position 263 (Arg263) is an Asymmetric dimethylarginine; alternate. Position 263 is an omega-N-methylarginine; alternate (Arg263). Disordered stretches follow at residues 310 to 365 and 383 to 437; these read DTSS…TEQP and PSSF…RAVG. Residues 313-324 are compositionally biased toward basic and acidic residues; the sequence is SEERWQKAEEQR. Polar residues-rich tracts occupy residues 354–364 and 383–393; these read AQQSRAVQTEQ and PSSFVPTSKTI. Basic and acidic residues predominate over residues 415 to 427; the sequence is YEPRPDGSQDARK. Ser431 is subject to Phosphoserine. Arg450 bears the Omega-N-methylarginine mark.

The protein is Proline and serine-rich protein 2 (Proser2) of Mus musculus (Mouse).